Consider the following 352-residue polypeptide: MTQISERLLVQAHLDAKQPKPLTAEEEAYYRSAIAAELKAQDAVLVAHFYCDPIIQALAEETGGCVSDSLEMARFGNAHPAKTVVVAGVKFMGETAKILNPEKRVLMPTLEATCSLDLGCPVDEFSAFCDQHPERTVVVYANTSAAVKARADWVVTSSCALEIVESLKDNGETIIWGPDKHLGTYIQRQTGADMLLWDGACIVHEEFKSKQLEDMKALYPDAAILVHPESPTSVIELADAVGSTSQLIAAAQSLPNKTLIVATDRGIFYKMQQLCPDKVFIEAPTAGNGAACRSCAHCPWMAMNTLERTLKCLKEGSNEIFVDPALIPQAIRPLKRMLDFTQAARMKLAGNA.

The iminosuccinate site is built by histidine 48 and serine 69. [4Fe-4S] cluster is bound at residue cysteine 114. Iminosuccinate contacts are provided by residues 140–142 (YAN) and serine 157. Cysteine 201 serves as a coordination point for [4Fe-4S] cluster. Residues 227–229 (HPE) and threonine 244 contribute to the iminosuccinate site. Cysteine 298 lines the [4Fe-4S] cluster pocket.

It belongs to the quinolinate synthase family. Type 1 subfamily. It depends on [4Fe-4S] cluster as a cofactor.

Its subcellular location is the cytoplasm. It catalyses the reaction iminosuccinate + dihydroxyacetone phosphate = quinolinate + phosphate + 2 H2O + H(+). It participates in cofactor biosynthesis; NAD(+) biosynthesis; quinolinate from iminoaspartate: step 1/1. Its function is as follows. Catalyzes the condensation of iminoaspartate with dihydroxyacetone phosphate to form quinolinate. This chain is Quinolinate synthase, found in Pseudomonas fluorescens (strain Pf0-1).